The sequence spans 258 residues: MSFDIHWSNLESDTRLNESIKNHLNTYLESISLPSYVCNLRILDFSLGKTAPNITLREISDPLDELYRGLNEDEPDSITPSPNDIQFLVEVEYKGDLLVTLAADLVLNYPSDNFMTLPVKLTISNVGLHSLCLVAHLSKHLLISFLCDISDVDLDGNESLLDPKGHVLSPRRSLERISIIRNMKIETEIGQQHSGEGSVLRSVGRLEQFLLEIFKDLLRKEVSWPSWIELDFNDDNEEDLQQSKDTPTTANTGTTTTN.

The region spanning 1–233 is the SMP-LTD domain; the sequence is MSFDIHWSNL…WPSWIELDFN (233 aa). A disordered region spans residues 238–258; the sequence is EDLQQSKDTPTTANTGTTTTN. A compositionally biased stretch (low complexity) spans 246 to 258; the sequence is TPTTANTGTTTTN.

Belongs to the MDM12 family. As to quaternary structure, component of the ER-mitochondria encounter structure (ERMES) or MDM complex, composed of MMM1, MDM10, MDM12 and MDM34. An MMM1 homodimer associates with one molecule of MDM12 on each side in a pairwise head-to-tail manner, and the SMP-LTD domains of MMM1 and MDM12 generate a continuous hydrophobic tunnel for phospholipid trafficking.

The protein resides in the mitochondrion outer membrane. It is found in the endoplasmic reticulum membrane. Its function is as follows. Component of the ERMES/MDM complex, which serves as a molecular tether to connect the endoplasmic reticulum (ER) and mitochondria. Components of this complex are involved in the control of mitochondrial shape and protein biogenesis, and function in nonvesicular lipid trafficking between the ER and mitochondria. MDM12 is required for the interaction of the ER-resident membrane protein MMM1 and the outer mitochondrial membrane-resident beta-barrel protein MDM10. The MDM12-MMM1 subcomplex functions in the major beta-barrel assembly pathway that is responsible for biogenesis of all mitochondrial outer membrane beta-barrel proteins, and acts in a late step after the SAM complex. The MDM10-MDM12-MMM1 subcomplex further acts in the TOM40-specific pathway after the action of the MDM12-MMM1 complex. Essential for establishing and maintaining the structure of mitochondria and maintenance of mtDNA nucleoids. This is Mitochondrial distribution and morphology protein 12 from Zygosaccharomyces rouxii (strain ATCC 2623 / CBS 732 / NBRC 1130 / NCYC 568 / NRRL Y-229).